A 589-amino-acid polypeptide reads, in one-letter code: Splicing factor U2af large subunit B (589 aa).

The disordered stretch occupies residues 1–195 (MMSYEGNGDG…KRRSGFDMAP (195 aa)). The span at 14–27 (STENHNENYISLES) shows a compositional bias: polar residues. 2 stretches are compositionally biased toward basic and acidic residues: residues 29–100 (PFHE…DRQR) and 109–145 (RDRSRERSEKRDDLDDDHHRRSRDRDRRRSRDRDREV). 2 stretches are compositionally biased toward basic residues: residues 146–156 (RHRRRSRSRSR) and 164–188 (RSEHRHKSEHRSRSRSRSRSKSKRR). RRM domains are found at residues 255–338 (RRVY…RPTD), 375–453 (DRIF…RAIQ), and 494–580 (QVVT…YPED).

Belongs to the splicing factor SR family. As to quaternary structure, component of the spliceosome. Interacts with SF1 in the nucleus.

It localises to the nucleus. It is found in the nucleus speckle. In terms of biological role, necessary for the splicing of pre-mRNA. The chain is Splicing factor U2af large subunit B from Arabidopsis thaliana (Mouse-ear cress).